A 250-amino-acid chain; its full sequence is 3-deoxy-manno-octulosonate cytidylyltransferase (250 aa).

Belongs to the KdsB family.

It localises to the cytoplasm. It carries out the reaction 3-deoxy-alpha-D-manno-oct-2-ulosonate + CTP = CMP-3-deoxy-beta-D-manno-octulosonate + diphosphate. It functions in the pathway nucleotide-sugar biosynthesis; CMP-3-deoxy-D-manno-octulosonate biosynthesis; CMP-3-deoxy-D-manno-octulosonate from 3-deoxy-D-manno-octulosonate and CTP: step 1/1. The protein operates within bacterial outer membrane biogenesis; lipopolysaccharide biosynthesis. Activates KDO (a required 8-carbon sugar) for incorporation into bacterial lipopolysaccharide in Gram-negative bacteria. The protein is 3-deoxy-manno-octulosonate cytidylyltransferase of Yersinia pseudotuberculosis serotype O:1b (strain IP 31758).